A 206-amino-acid chain; its full sequence is Twist-related protein 1 (206 aa).

The span at 1–18 (MMQDVSSSPVSPADDSLS) shows a compositional bias: low complexity. Residues 1–109 (MMQDVSSSPV…GGGSPQSYEE (109 aa)) form a disordered region. Basic residues predominate over residues 34-43 (RGARKRRSSR). Gly residues-rich tracts occupy residues 48 to 65 (GSAGPGGATGGGIGGGDE) and 78 to 103 (SAGGGGGGGAGGGGGGGGGSSSGGGS). The region spanning 112 to 163 (TQRVMANVRERQRTQSLNEAFAALRKIIPTLPSDKLSKIQTLKLAARYIDFL) is the bHLH domain. Residues 165 to 195 (QVLQSDELDSKMASCSYVAHERLSYAFSVWR) form a sufficient for transactivation activity region.

In terms of assembly, efficient DNA binding requires dimerization with another bHLH protein. Homodimer or heterodimer with E proteins such as TCF3. ID1 binds preferentially to TCF3 but does not interact efficiently with TWIST1 so ID1 levels control the amount of TCF3 available to dimerize with TWIST1 and thus determine the type of dimer formed. As to expression, subset of mesodermal cells.

The protein localises to the nucleus. Its function is as follows. Acts as a transcriptional regulator. Inhibits myogenesis by sequestrating E proteins, inhibiting trans-activation by MEF2, and inhibiting DNA-binding by MYOD1 through physical interaction. This interaction probably involves the basic domains of both proteins. Also represses expression of pro-inflammatory cytokines such as TNFA and IL1B. Regulates cranial suture patterning and fusion. Activates transcription as a heterodimer with E proteins. Regulates gene expression differentially, depending on dimer composition. Homodimers induce expression of FGFR2 and POSTN while heterodimers repress FGFR2 and POSTN expression and induce THBS1 expression. Heterodimerization is also required for osteoblast differentiation. Represses the activity of the circadian transcriptional activator: NPAS2-BMAL1 heterodimer. The protein is Twist-related protein 1 (Twist1) of Mus musculus (Mouse).